The following is a 24-amino-acid chain: Coenzyme PQQ synthesis protein A (24 aa).

A cross-link (pyrroloquinoline quinone (Glu-Tyr)) is located at residues 16–20 (EVTMY).

This sequence belongs to the PqqA family.

It functions in the pathway cofactor biosynthesis; pyrroloquinoline quinone biosynthesis. Its function is as follows. Required for coenzyme pyrroloquinoline quinone (PQQ) biosynthesis. PQQ is probably formed by cross-linking a specific glutamate to a specific tyrosine residue and excising these residues from the peptide. The sequence is that of Coenzyme PQQ synthesis protein A from Pseudomonas syringae pv. syringae (strain B728a).